The chain runs to 247 residues: Probable transcriptional regulatory protein Hhal_2210 (247 aa).

Belongs to the TACO1 family.

The protein resides in the cytoplasm. This chain is Probable transcriptional regulatory protein Hhal_2210, found in Halorhodospira halophila (strain DSM 244 / SL1) (Ectothiorhodospira halophila (strain DSM 244 / SL1)).